The chain runs to 504 residues: Putative ribose/galactose/methyl galactoside import ATP-binding protein (504 aa).

ABC transporter domains follow at residues 5 to 242 (ISVK…GRNL) and 252 to 497 (TSAN…TRRE). An ATP-binding site is contributed by 37–44 (GENGAGKS).

Belongs to the ABC transporter superfamily. Carbohydrate importer 2 (CUT2) (TC 3.A.1.2) family.

It localises to the cell inner membrane. The enzyme catalyses D-ribose(out) + ATP + H2O = D-ribose(in) + ADP + phosphate + H(+). It carries out the reaction D-galactose(out) + ATP + H2O = D-galactose(in) + ADP + phosphate + H(+). Its function is as follows. Part of an ABC transporter complex involved in carbohydrate import. Could be involved in ribose, galactose and/or methyl galactoside import. Responsible for energy coupling to the transport system. This chain is Putative ribose/galactose/methyl galactoside import ATP-binding protein, found in Albidiferax ferrireducens (strain ATCC BAA-621 / DSM 15236 / T118) (Rhodoferax ferrireducens).